Consider the following 528-residue polypeptide: Probable feruloyl esterase B-1 (528 aa).

The first 19 residues, 1–19, serve as a signal peptide directing secretion; the sequence is MMWWFLLIGLASAAATASS. 6 disulfide bridges follow: cysteine 29-cysteine 78, cysteine 64-cysteine 117, cysteine 190-cysteine 445, cysteine 259-cysteine 276, cysteine 285-cysteine 295, and cysteine 505-cysteine 527. 2 N-linked (GlcNAc...) asparagine glycosylation sites follow: asparagine 83 and asparagine 101. Catalysis depends on serine 191, which acts as the Acyl-ester intermediate. Positions 260, 263, 265, 267, and 269 each coordinate Ca(2+). 3 N-linked (GlcNAc...) asparagine glycosylation sites follow: asparagine 286, asparagine 354, and asparagine 385. Catalysis depends on charge relay system residues aspartate 404 and histidine 444.

The protein belongs to the tannase family.

Its subcellular location is the secreted. The enzyme catalyses feruloyl-polysaccharide + H2O = ferulate + polysaccharide.. Its function is as follows. Involved in degradation of plant cell walls. Hydrolyzes the feruloyl-arabinose ester bond in arabinoxylans as well as the feruloyl-galactose and feruloyl-arabinose ester bonds in pectin. The protein is Probable feruloyl esterase B-1 (faeB-1) of Aspergillus fumigatus (strain CBS 144.89 / FGSC A1163 / CEA10) (Neosartorya fumigata).